We begin with the raw amino-acid sequence, 278 residues long: Fe(II)/2-oxoglutarate-dependent dioxygenase nvfI (278 aa).

It belongs to the asaB hydroxylase/desaturase family.

It carries out the reaction asnovolin A + 2-oxoglutarate + 2 O2 = fumigatonoid A + succinate + CO2. It participates in secondary metabolite biosynthesis; terpenoid biosynthesis. Its function is as follows. Fe(II)/2-oxoglutarate-dependent dioxygenase; part of the gene cluster that mediates the biosynthesis of novofumigatonin, a heavily oxygenated meroterpenoid containing a unique orthoester moiety. The first step of the pathway is the synthesis of 3,5-dimethylorsellinic acid (DMOA) by the polyketide synthase nvfA via condensation of one acetyl-CoA starter unit with 3 malonyl-CoA units and 2 methylations. DMOA is then converted to farnesyl-DMOA by the farnesyltransferase nvfB. Epoxydation by FAD-dependent monooxygenase nvfK, followed by a protonation-initiated cyclization catalyzed by the terpene cyclase nvfL leads to the production of asnavolin H. The short chain dehydrogenase nvfC then as a 3-OH dehydrogenase of asnovolin H to yield chemesin D. There are two branches to synthesize asnovolin A from chemesin D. In one branch, chemesin D undergoes Baeyer-Villiger oxidation by nvfH, methylation by nvfJ, and enoyl reduction by the nvfM D enoylreductase that reduces the double bond between C-5'and C-6', to form respectively asnovolin I, asnovolin K, and asnovolin A. In the other branch, the methylation precedes the Baeyer-Villiger oxidation and the enoyl reduction to yield asnovolin A via the asnovolin J intermediate. Asnovolin A is further converted to fumigatonoid A by the Fe(II)/2-oxoglutarate-dependent dioxygenase nvfI that catalyzes an endoperoxidation reaction. The alpha/beta hydrolase nvfD then acts as an epimerase that converts fumigatonoid A to its C-5' epimer, which then undergoes spontaneous or nvfD-catalyzed lactonization. The following step utilizes the ketoreductase nvfG to produce fumigatonoid B. The dioxygenase nvfE further converts fumigatonoid B into fumigatonoid C. Finally the Fe(II)/2-oxoglutarate-dependent dioxygenase nvfF catalyzes two rounds of oxidation to transform fumigatonoid C into the end product, novofumigatonin A. The polypeptide is Fe(II)/2-oxoglutarate-dependent dioxygenase nvfI (Aspergillus novofumigatus (strain IBT 16806)).